An 807-amino-acid polypeptide reads, in one-letter code: MDDEDVEIDLLTKSSNVDVFCEASTSGNVAQCATVSELRNGMDFESKEAAYYFYREYARSVGFGITIKASRRSKRSGKFIDVKIACSRFGTKREKATAINPRSCPKTGCKAGLHMKRKEDEKWVIYNFVKEHNHEICPDDFYVSVRGKNKPAGALAIKKGLQLALEEEDLKLLLEHFMEMQDKQPGFFYAVDFDSDKRVRNVFWLDAKAKHDYCSFSDVVLFDTFYVRNGYRIPFAPFIGVSHHRQYVLLGCALIGEVSESTYSWLFRTWLKAVGGQAPGVMITDQDKLLSDIVVEVFPDVRHIFCLWSVLSKISEMLNPFVSQDDGFMESFGNCVASSWTDEHFERRWSNMIGKFELNENEWVQLLFRDRKKWVPHYFHGICLAGLSGPERSGSIASHFDKYMNSEATFKDFFELYMKFLQYRCDVEAKDDLEYQSKQPTLRSSLAFEKQLSLIYTDAAFKKFQAEVPGVVSCQLQKEREDGTTAIFRIEDFEERQNFFVALNNELLDACCSCHLFEYQGFLCKHAILVLQSADVSRVPSQYILKRWSKKGNNKEDKNDKCATIDNRMARFDDLCRRFVKLGVVASLSDEACKTALKLLEETVKHCVSMDNSSKFPSEPDKLMTGGSIGLENEGVLDCASKVSKKKKIQKKRKVYCGPEDATNRSEELRQETEQVSSRAPTFENCYIPQANMEEPELGSRATTLGVYYSTQQTNQGFPSISSIQNGYYGHPPTIQAMGNLHSIHERMSQYETQPSMQGAFQGQTGFRGSAIRGCYDIEETLHDMTMGSSQFQGSDSSHPSDHRLSN.

The FAR1 domain occupies 52 to 138 (YFYREYARSV…VKEHNHEICP (87 aa)). One can recognise an MULE domain in the interval 219 to 315 (VVLFDTFYVR…CLWSVLSKIS (97 aa)). The SWIM-type zinc-finger motif lies at 499 to 535 (FFVALNNELLDACCSCHLFEYQGFLCKHAILVLQSAD). The stretch at 660–680 (EDATNRSEELRQETEQVSSRA) forms a coiled coil. The segment covering 788–798 (GSSQFQGSDSS) has biased composition (polar residues). The disordered stretch occupies residues 788 to 807 (GSSQFQGSDSSHPSDHRLSN).

Belongs to the FHY3/FAR1 family. As to expression, expressed in hypocotyls, rosette and cauline leaves, inflorescences stems, flowers and siliques.

The protein localises to the nucleus. Putative transcription activator involved in regulating light control of development. In Arabidopsis thaliana (Mouse-ear cress), this protein is Protein FAR1-RELATED SEQUENCE 2 (FRS2).